Reading from the N-terminus, the 334-residue chain is Glyceraldehyde-3-phosphate dehydrogenase (334 aa).

NAD(+) contacts are provided by residues 12–13 and Gly111; that span reads TI. Residue 140–142 participates in D-glyceraldehyde 3-phosphate binding; sequence SCN. Catalysis depends on Cys141, which acts as the Nucleophile. Residue Arg167 participates in NAD(+) binding. Residue 192-193 participates in D-glyceraldehyde 3-phosphate binding; it reads HG. Gln298 is a binding site for NAD(+).

The protein belongs to the glyceraldehyde-3-phosphate dehydrogenase family. In terms of assembly, homotetramer.

The protein resides in the cytoplasm. It carries out the reaction D-glyceraldehyde 3-phosphate + phosphate + NADP(+) = (2R)-3-phospho-glyceroyl phosphate + NADPH + H(+). The catalysed reaction is D-glyceraldehyde 3-phosphate + phosphate + NAD(+) = (2R)-3-phospho-glyceroyl phosphate + NADH + H(+). It participates in carbohydrate degradation; glycolysis; pyruvate from D-glyceraldehyde 3-phosphate: step 1/5. The sequence is that of Glyceraldehyde-3-phosphate dehydrogenase from Thermococcus kodakarensis (strain ATCC BAA-918 / JCM 12380 / KOD1) (Pyrococcus kodakaraensis (strain KOD1)).